The sequence spans 636 residues: Chaperone protein HtpG (636 aa).

Residues 1–329 (MSKEHGAAAE…TEDLPLNISR (329 aa)) are a; substrate-binding. The segment at 330–550 (ETLQENALIA…DGGMTASMEK (221 aa)) is b. The c stretch occupies residues 551–636 (LMRVMNKDES…TGWYAEVRKL (86 aa)).

It belongs to the heat shock protein 90 family. Homodimer.

The protein resides in the cytoplasm. Its function is as follows. Molecular chaperone. Has ATPase activity. The polypeptide is Chaperone protein HtpG (Oleidesulfovibrio alaskensis (strain ATCC BAA-1058 / DSM 17464 / G20) (Desulfovibrio alaskensis)).